The following is a 333-amino-acid chain: O-acetyl transferase (333 aa).

Belongs to the acyltransferase 3 family.

The protein localises to the host cell inner membrane. Antigenically converts S.flexneri serotype X to 3a, Y to 3b, 1a to 1b and 4a to 4b by O-acetylating the O-antigenic polysaccharide chain. This Shigella flexneri (Shigella flexneri bacteriophage VI) protein is O-acetyl transferase (OAC).